A 401-amino-acid chain; its full sequence is Enoyl-[acyl-carrier-protein] reductase [NADH] (401 aa).

NAD(+) contacts are provided by residues Gly48 to Tyr53, Phe74 to Glu75, Asp111 to Ala112, and Leu140 to Ala141. Tyr226 serves as a coordination point for substrate. The active-site Proton donor is the Tyr236. Residues Lys245 and Val274 to Thr276 each bind NAD(+).

The protein belongs to the TER reductase family. As to quaternary structure, monomer.

It catalyses the reaction a 2,3-saturated acyl-[ACP] + NAD(+) = a (2E)-enoyl-[ACP] + NADH + H(+). It functions in the pathway lipid metabolism; fatty acid biosynthesis. In terms of biological role, involved in the final reduction of the elongation cycle of fatty acid synthesis (FAS II). Catalyzes the reduction of a carbon-carbon double bond in an enoyl moiety that is covalently linked to an acyl carrier protein (ACP). In Xylella fastidiosa (strain Temecula1 / ATCC 700964), this protein is Enoyl-[acyl-carrier-protein] reductase [NADH].